A 361-amino-acid chain; its full sequence is Phospho-N-acetylmuramoyl-pentapeptide-transferase (361 aa).

The next 10 membrane-spanning stretches (helical) occupy residues 17-37 (SIYL…LFAG), 66-86 (GTPT…SIFI), 90-110 (TNSL…IGFI), 129-149 (LLFQ…IGLT), 162-182 (ISAY…QIVL), 197-217 (GLAI…AYFT), 232-252 (VGSG…LGFL), 261-281 (IFMG…IAII), 286-306 (LMLP…ILQV), and 340-360 (FWIG…MRGI).

Belongs to the glycosyltransferase 4 family. MraY subfamily. Mg(2+) is required as a cofactor.

It is found in the cell inner membrane. It catalyses the reaction UDP-N-acetyl-alpha-D-muramoyl-L-alanyl-gamma-D-glutamyl-meso-2,6-diaminopimeloyl-D-alanyl-D-alanine + di-trans,octa-cis-undecaprenyl phosphate = di-trans,octa-cis-undecaprenyl diphospho-N-acetyl-alpha-D-muramoyl-L-alanyl-D-glutamyl-meso-2,6-diaminopimeloyl-D-alanyl-D-alanine + UMP. It functions in the pathway cell wall biogenesis; peptidoglycan biosynthesis. Catalyzes the initial step of the lipid cycle reactions in the biosynthesis of the cell wall peptidoglycan: transfers peptidoglycan precursor phospho-MurNAc-pentapeptide from UDP-MurNAc-pentapeptide onto the lipid carrier undecaprenyl phosphate, yielding undecaprenyl-pyrophosphoryl-MurNAc-pentapeptide, known as lipid I. The polypeptide is Phospho-N-acetylmuramoyl-pentapeptide-transferase (Fusobacterium nucleatum subsp. nucleatum (strain ATCC 25586 / DSM 15643 / BCRC 10681 / CIP 101130 / JCM 8532 / KCTC 2640 / LMG 13131 / VPI 4355)).